Here is a 155-residue protein sequence, read N- to C-terminus: Protein-export protein SecB (155 aa).

This sequence belongs to the SecB family. In terms of assembly, homotetramer, a dimer of dimers. One homotetramer interacts with 1 SecA dimer.

It localises to the cytoplasm. One of the proteins required for the normal export of preproteins out of the cell cytoplasm. It is a molecular chaperone that binds to a subset of precursor proteins, maintaining them in a translocation-competent state. It also specifically binds to its receptor SecA. The polypeptide is Protein-export protein SecB (Escherichia coli O127:H6 (strain E2348/69 / EPEC)).